Consider the following 797-residue polypeptide: Inulosucrase (797 aa).

The first 36 residues, 1–36, serve as a signal peptide directing secretion; the sequence is MLENKNHKKISLSGKSLLMGTLSTAAIVLSASTANA. Residues 54–64 are compositionally biased toward polar residues; it reads ASSVNNENNKQ. Residues 54 to 176 are disordered; that stretch reads ASSVNNENNK…SVKPAENATK (123 aa). 2 stretches are compositionally biased toward basic and acidic residues: residues 65-75 and 82-95; these read VTEKDSADKST and ANTK…ETTE. Positions 130-139 are enriched in low complexity; sequence DQKTTNAATT. Over residues 140–167 the composition is skewed to basic and acidic residues; it reads DTKKDDVKQVEKKDSVDKTNAEENKDSS. W271 lines the substrate pocket. D272 serves as the catalytic Nucleophile. N317 is a Ca(2+) binding site. A substrate-binding site is contributed by S340. D419 is a Ca(2+) binding site. Residue 424 to 425 participates in substrate binding; sequence RD. 4 residues coordinate Ca(2+): Q450, W487, N489, and D521. Substrate contacts are provided by residues 522–524 and R542; that span reads EIE. The active-site Proton donor/acceptor is E524. Ca(2+)-binding residues include D660, I662, and S667. Residues 708 to 766 are disordered; sequence QPVTPIPNVPTTPETPTTPDKPEVPTTPEVPTTPETPTPEAPKNPVKKTSQSKLPKAGD. Low complexity predominate over residues 718 to 740; the sequence is TTPETPTTPDKPEVPTTPEVPTT. The short motif at 761–765 is the LPXTG sorting signal element; the sequence is LPKAG. A764 bears the Pentaglycyl murein peptidoglycan amidated alanine mark. The propeptide at 765–797 is removed by sortase; it reads GDKNSFAAVVLGAVSSILGAVGLTGVSKRKRNN.

The protein belongs to the glycosyl hydrolase 68 family. The cofactor is Ca(2+).

It localises to the secreted. The protein localises to the cell wall. The catalysed reaction is [(2-&gt;1)-beta-D-fructosyl](n) + sucrose = [(2-&gt;1)-beta-D-fructosyl](n+1) + D-glucose. Fructosyltransferase that catalyzes the polymerization of the fructose moiety of sucrose to produce inulin polymer and inulin oligosaccharides such as 1-kestose and nystose. This is Inulosucrase from Lactobacillus johnsonii (strain CNCM I-12250 / La1 / NCC 533).